A 221-amino-acid polypeptide reads, in one-letter code: Protein DEHYDRATION-INDUCED 19 homolog 2 (221 aa).

2 disordered regions span residues methionine 1–lysine 24 and valine 162–aspartate 193.

It belongs to the Di19 family. Not phosphorylated in vitro by CPK3 or CPK11. Expressed in seedlings, roots, leaves, stems, flowers and siliques.

The protein resides in the cytoplasm. It localises to the nucleus. This chain is Protein DEHYDRATION-INDUCED 19 homolog 2 (DI19-2), found in Arabidopsis thaliana (Mouse-ear cress).